Consider the following 207-residue polypeptide: Uracil phosphoribosyltransferase (207 aa).

5-phospho-alpha-D-ribose 1-diphosphate is bound by residues arginine 77, arginine 102, and 129–137; that span reads DPMLATGGS. Residues isoleucine 192 and 197–199 contribute to the uracil site; that span reads GDA. A 5-phospho-alpha-D-ribose 1-diphosphate-binding site is contributed by aspartate 198.

Belongs to the UPRTase family. The cofactor is Mg(2+).

The catalysed reaction is UMP + diphosphate = 5-phospho-alpha-D-ribose 1-diphosphate + uracil. Its pathway is pyrimidine metabolism; UMP biosynthesis via salvage pathway; UMP from uracil: step 1/1. With respect to regulation, allosterically activated by GTP. In terms of biological role, catalyzes the conversion of uracil and 5-phospho-alpha-D-ribose 1-diphosphate (PRPP) to UMP and diphosphate. This chain is Uracil phosphoribosyltransferase, found in Mesoplasma florum (strain ATCC 33453 / NBRC 100688 / NCTC 11704 / L1) (Acholeplasma florum).